We begin with the raw amino-acid sequence, 340 residues long: Putative pyridoxal kinase C18.10 (340 aa).

Substrate contacts are provided by Ser19 and Tyr130. Residues 189 to 190 (TS) and 218 to 230 (QFPSLSGVFTGTG) contribute to the ATP site. Residue Asp231 participates in substrate binding.

Belongs to the pyridoxine kinase family. A divalent metal cation is required as a cofactor.

The protein localises to the cytoplasm. It is found in the nucleus. The enzyme catalyses pyridoxal + ATP = pyridoxal 5'-phosphate + ADP + H(+). In terms of biological role, required for synthesis of pyridoxal-5-phosphate from vitamin B6. The sequence is that of Putative pyridoxal kinase C18.10 from Schizosaccharomyces pombe (strain 972 / ATCC 24843) (Fission yeast).